The chain runs to 515 residues: G-protein coupled receptor 176 (515 aa).

The segment covering 1–16 (MGHNGSWISPNASEPH) has biased composition (polar residues). Positions 1–20 (MGHNGSWISPNASEPHNASG) are disordered. Residues 1–42 (MGHNGSWISPNASEPHNASGAEAAGVNRSALGEFGEAQLYRQ) lie on the Extracellular side of the membrane. N-linked (GlcNAc...) asparagine glycosylation is found at Asn-4, Asn-11, Asn-17, and Asn-27. The chain crosses the membrane as a helical span at residues 43 to 63 (FTTTVQVVIFIGSLLGNFMVL). Over 64–82 (WSTCRTTVFKSVTNRFIKN) the chain is Cytoplasmic. The helical transmembrane segment at 83–103 (LACSGICASLVCVPFDIILST) threads the bilayer. Over 104–118 (SPHCCWWIYTMLFCK) the chain is Extracellular. Residues 119–139 (VVKFLHKVFCSVTILSFPAIA) traverse the membrane as a helical segment. Topologically, residues 140-160 (LDRYYSVLYPLERKISDAKSR) are cytoplasmic. A helical membrane pass occupies residues 161-181 (ELVMYIWAHAVVASVPVFAVT). The Extracellular portion of the chain corresponds to 182 to 207 (NVADIYATSTCTEVWSNSLGHLVYVL). The chain crosses the membrane as a helical span at residues 208-228 (VYNITTVIVPVVVVFLFLILI). The Cytoplasmic segment spans residues 229–267 (RRALSASQKKKVIIAALRTPQNTISIPYASQREAELHAT). The helical transmembrane segment at 268 to 288 (LLSMVMVFILCSVPYATLVVY) threads the bilayer. The Extracellular portion of the chain corresponds to 289-299 (QTVLNVPDTSV). Residues 300–320 (FLLLTAVWLPKVSLLANPVLF) form a helical membrane-spanning segment. The Cytoplasmic segment spans residues 321-515 (LTVNKSVRKC…KVSIFPKVDS (195 aa)).

The protein belongs to the G-protein coupled receptor 1 family.

Its subcellular location is the cell membrane. In terms of biological role, orphan receptor involved in normal circadian rhythm behavior. Acts through the G-protein subclass G(z)-alpha and has an agonist-independent basal activity to repress cAMP production. The sequence is that of G-protein coupled receptor 176 (GPR176) from Homo sapiens (Human).